The chain runs to 210 residues: Na(+)-translocating NADH-quinone reductase subunit D (210 aa).

Transmembrane regions (helical) follow at residues 14–34, 42–62, 72–92, 103–123, 131–151, and 178–198; these read PIVNNNPIALQVLGVCSALAV, LVMALALTAVTAFSNLFISMI, IIVQMTIIASLVIVVDQLLQA, VFVGLIITNCIVMGRAEAYAM, FMDGIGNGLGYGAILLAVGFV, and NGLLLLPPSAFFLIGVLIWII.

Belongs to the NqrDE/RnfAE family. As to quaternary structure, composed of six subunits; NqrA, NqrB, NqrC, NqrD, NqrE and NqrF.

It localises to the cell inner membrane. The enzyme catalyses a ubiquinone + n Na(+)(in) + NADH + H(+) = a ubiquinol + n Na(+)(out) + NAD(+). In terms of biological role, NQR complex catalyzes the reduction of ubiquinone-1 to ubiquinol by two successive reactions, coupled with the transport of Na(+) ions from the cytoplasm to the periplasm. NqrA to NqrE are probably involved in the second step, the conversion of ubisemiquinone to ubiquinol. In Shewanella baltica (strain OS223), this protein is Na(+)-translocating NADH-quinone reductase subunit D.